Here is a 269-residue protein sequence, read N- to C-terminus: MAEVPELASEMMAYYSGNEDDLFFEADGPKQMKCSFQDLDLCPLDGGIQLRISDHHYSKGFRQAASVVVAMDKLRKMLVPCPQTFQENDLSTFFPFIFEEEPIFFDTWDNEAYVHDAPVRSLNCTLRDSQQKSLVMSGPYELKALHLQGQDMEQQVVFSMSFVQGEESNDKIPVALGLKEKNLYLSCVLKDDKPTLQLESVDPKNYPKKKMEKRFVFNKIEINNKLEFESAQFPNWYISTSQAENMPVFLGGTKGGQDITDFTMQFVSS.

A propeptide spans 1–116 (MAEVPELASE…TWDNEAYVHD (116 aa)) (removed in mature form; by CASP1). Residues 228 to 241 (FESAQFPNWYISTS) carry the Involved in interaction with TMED10 C-terminus motif.

This sequence belongs to the IL-1 family. As to quaternary structure, monomer. In its precursor form, weakly interacts with full-length MEFV; the mature cytokine does not interact at all. Interacts with integrins ITGAV:ITGBV and ITGA5:ITGB1; integrin-binding is required for IL1B signaling. Interacts with cargo receptor TMED10; the interaction is direct and is required for the secretion of IL1B mature form. Interacts with HSP90AB1; the interaction facilitates cargo translocation into the ERGIC. Interacts with HSP90B1; the interaction facilitates cargo translocation into the ERGIC. Post-translationally, activation of the IL1B precursor involves a CASP1-catalyzed proteolytic cleavage. Processing and secretion are temporarily associated. In terms of processing, (Microbial infection) Cleavage by S.pyogenes cysteine protease SpeB promotes its activation independently of CASP1. In terms of tissue distribution, expressed in activated monocytes/macrophages (at protein level).

The protein resides in the cytoplasm. It localises to the cytosol. Its subcellular location is the secreted. It is found in the lysosome. The protein localises to the extracellular exosome. (Microbial infection) Cleavage by S.pyogenes cysteine protease SpeB promotes its activation independently of CASP1. SpeB-mediated maturation of IL1B plays a dual role depending on infection site: while IL1B inflammatory response prevents bacterial growth during invasive skin infections, it promotes streptococcal infection of the nasopharynx by disrupting colonization resistance mediated by the microbiota. Its function is as follows. Potent pro-inflammatory cytokine. Initially discovered as the major endogenous pyrogen, induces prostaglandin synthesis, neutrophil influx and activation, T-cell activation and cytokine production, B-cell activation and antibody production, and fibroblast proliferation and collagen production. Promotes Th17 differentiation of T-cells. Synergizes with IL12/interleukin-12 to induce IFNG synthesis from T-helper 1 (Th1) cells. Plays a role in angiogenesis by inducing VEGF production synergistically with TNF and IL6. Involved in transduction of inflammation downstream of pyroptosis: its mature form is specifically released in the extracellular milieu by passing through the gasdermin-D (GSDMD) pore. Acts as a sensor of S.pyogenes infection in skin: cleaved and activated by pyogenes SpeB protease, leading to an inflammatory response that prevents bacterial growth during invasive skin infection. The polypeptide is Interleukin-1 beta (Homo sapiens (Human)).